The primary structure comprises 200 residues: MAQQRALPQSKETLLQSYNKRLKDDIKSIMDNFTEIIKTAKIEDETQVSRATQGEQDNYEMHVRAANIVRAGESLMKLVSDLKQFLILNDFPSVNEAIDQRNQQLRALQEECDRKLITLRDEVSIDLYELEEEYYSSSSSLCEANDLPLCEAYWRLDLDTDSADGLSAPLLASPETGAGPLQSAAPVHSHGGGPGPTEHT.

A coiled-coil region spans residues 93–122 (SVNEAIDQRNQQLRALQEECDRKLITLRDE). The interval 167-200 (SAPLLASPETGAGPLQSAAPVHSHGGGPGPTEHT) is disordered. Positions 190 to 200 (HGGGPGPTEHT) are enriched in gly residues.

Belongs to the Mediator complex subunit 22 family. As to quaternary structure, component of the Mediator complex, which is composed of MED1, MED4, MED6, MED7, MED8, MED9, MED10, MED11, MED12, MED13, MED13L, MED14, MED15, MED16, MED17, MED18, MED19, MED20, MED21, MED22, MED23, MED24, MED25, MED26, MED27, MED29, MED30, MED31, CCNC, CDK8 and CDC2L6/CDK11. The MED12, MED13, CCNC and CDK8 subunits form a distinct module termed the CDK8 module. Mediator containing the CDK8 module is less active than Mediator lacking this module in supporting transcriptional activation. Individual preparations of the Mediator complex lacking one or more distinct subunits have been variously termed ARC, CRSP, DRIP, PC2, SMCC and TRAP.

It is found in the nucleus. Functionally, component of the Mediator complex, a coactivator involved in the regulated transcription of nearly all RNA polymerase II-dependent genes. Mediator functions as a bridge to convey information from gene-specific regulatory proteins to the basal RNA polymerase II transcription machinery. Mediator is recruited to promoters by direct interactions with regulatory proteins and serves as a scaffold for the assembly of a functional preinitiation complex with RNA polymerase II and the general transcription factors. The protein is Mediator of RNA polymerase II transcription subunit 22 (Med22) of Rattus norvegicus (Rat).